A 206-amino-acid polypeptide reads, in one-letter code: Large ribosomal subunit protein uL4 (206 aa).

The segment at 63–94 (MYKQKGTGRARHHSARAPQFRGGGKAHGPVVR) is disordered. The span at 64–77 (YKQKGTGRARHHSA) shows a compositional bias: basic residues.

This sequence belongs to the universal ribosomal protein uL4 family. In terms of assembly, part of the 50S ribosomal subunit.

One of the primary rRNA binding proteins, this protein initially binds near the 5'-end of the 23S rRNA. It is important during the early stages of 50S assembly. It makes multiple contacts with different domains of the 23S rRNA in the assembled 50S subunit and ribosome. In terms of biological role, forms part of the polypeptide exit tunnel. This chain is Large ribosomal subunit protein uL4, found in Mesorhizobium japonicum (strain LMG 29417 / CECT 9101 / MAFF 303099) (Mesorhizobium loti (strain MAFF 303099)).